Consider the following 78-residue polypeptide: MSRVCQVTGKGPVTGNNISHANNKTRRRFLPNLQHHRFWVESEKRFVRLRVSAKGMRIIDKRGIDAVLVDIRKAGAKV.

The interval 1–20 is disordered; that stretch reads MSRVCQVTGKGPVTGNNISH.

This sequence belongs to the bacterial ribosomal protein bL28 family.

This Pseudomonas putida (strain ATCC 700007 / DSM 6899 / JCM 31910 / BCRC 17059 / LMG 24140 / F1) protein is Large ribosomal subunit protein bL28.